Here is a 471-residue protein sequence, read N- to C-terminus: Ammonium transporter Rh type B (471 aa).

Topologically, residues 1–13 (MAGSPSRAAGRRL) are cytoplasmic. Residues 14 to 33 (QLPLLSFLQGATAVLFAVFV) form a helical membrane-spanning segment. The Extracellular portion of the chain corresponds to 34–60 (RYNHKTDAALWHRGNHSNADNEFYFRY). Asparagine 48 carries N-linked (GlcNAc...) asparagine glycosylation. Residues 61–81 (PSFQDVHAMVFVGFGFLMVFL) form a helical membrane-spanning segment. Over 82–85 (QRYG) the chain is Cytoplasmic. The chain crosses the membrane as a helical span at residues 86–106 (FSSVGFTFLLAAFALQWSTLV). At 107–123 (QGFLHSFHGGHIHVGVE) the chain is on the extracellular side. The chain crosses the membrane as a helical span at residues 124-144 (SMINADFCAGAVLISFGAVLG). Residues 145–148 (KTGP) are Cytoplasmic-facing. The helical transmembrane segment at 149–169 (AQLLLMALLEVVLFGINEFVL) threads the bilayer. The Extracellular segment spans residues 170-177 (LHLLGVRD). Residues 178–200 (AGGSMTIHTFGAYFGLVLSQVLY) traverse the membrane as a helical segment. Topologically, residues 201–217 (RPQLEKSKHRQGLYHSD) are cytoplasmic. A helical membrane pass occupies residues 218 to 238 (LFAMIGTIFLWIFWPSFNAAL). At 239-249 (TSLGAGQHRTA) the chain is on the extracellular side. The helical transmembrane segment at 250-270 (LNTYYSLAASTLGTFALSALV) threads the bilayer. The Cytoplasmic portion of the chain corresponds to 271 to 280 (GEDGRLDMVH). Residues 281-301 (IQNAALAGRVVVGTSSEMMLT) traverse the membrane as a helical segment. Position 302 (proline 302) is a topological domain, extracellular. The chain crosses the membrane as a helical span at residues 303-323 (FGALAAGFLAGTVSTLGYKFF). Topologically, residues 324 to 344 (TPILESKFKVQDTCGVHNLHG) are cytoplasmic. A helical membrane pass occupies residues 345–365 (MPGVLGVLLGVLVAGLATHEA). The Extracellular segment spans residues 366 to 391 (YGDGLESVFPLIAEGQRSATSQAMYQ). Residues 392–412 (LFGLFVTLMFASVGGGLGGLL) traverse the membrane as a helical segment. Residues 413–471 (LKLPFLDSPPDSQCYEDQVHWQAPGATLSPLPTPAFQVPGEHEDKAQRPLRVEEADTQA) are Cytoplasmic-facing. The tract at residues 414–422 (KLPFLDSPP) is interaction with ANK3. Positions 427–430 (YEDQ) match the Basolateral sorting signal motif. A disordered region spans residues 437–471 (GATLSPLPTPAFQVPGEHEDKAQRPLRVEEADTQA). Positions 452–471 (GEHEDKAQRPLRVEEADTQA) are enriched in basic and acidic residues.

This sequence belongs to the ammonium transporter (TC 2.A.49) family. Rh subfamily. Interacts (via C-terminus) with ANK2 and ANK3; required for targeting to the basolateral membrane. N-glycosylated.

It is found in the cell membrane. The protein resides in the basolateral cell membrane. The enzyme catalyses NH4(+)(in) = NH4(+)(out). It catalyses the reaction methylamine(out) = methylamine(in). It carries out the reaction CO2(out) = CO2(in). Ammonium transporter involved in the maintenance of acid-base homeostasis. Transports ammonium and its related derivative methylammonium across the basolateral plasma membrane of epithelial cells likely contributing to renal transepithelial ammonia transport and ammonia metabolism. May transport either NH4(+) or NH3 ammonia species predominantly mediating an electrogenic NH4(+) transport. May act as a CO2 channel providing for renal acid secretion. This Pongo pygmaeus (Bornean orangutan) protein is Ammonium transporter Rh type B (RHBG).